The sequence spans 480 residues: Mannose-1-phosphate guanylyltransferase ManC (480 aa).

This sequence belongs to the mannose-6-phosphate isomerase type 2 family.

It catalyses the reaction alpha-D-mannose 1-phosphate + GTP + H(+) = GDP-alpha-D-mannose + diphosphate. It participates in nucleotide-sugar biosynthesis; GDP-alpha-D-mannose biosynthesis; GDP-alpha-D-mannose from alpha-D-mannose 1-phosphate (GTP route): step 1/1. Its function is as follows. Involved in the biosynthesis of the capsular polysaccharide colanic acid. The protein is Mannose-1-phosphate guanylyltransferase ManC (manC) of Salmonella typhimurium (strain LT2 / SGSC1412 / ATCC 700720).